Reading from the N-terminus, the 140-residue chain is Peptidyl-prolyl cis-trans isomerase FKBP2 (140 aa).

The signal sequence occupies residues 1–20 (MRLSWVLTVLSICLSALVTA). A PPIase FKBP-type domain is found at 47–135 (GDVLHMHYTG…VFEVELLKIE (89 aa)).

Belongs to the FKBP-type PPIase family. FKBP2 subfamily. Interacts with ARFGEF1/BIG1 and the C-terminal of EPB41L2.

It localises to the endoplasmic reticulum membrane. The catalysed reaction is [protein]-peptidylproline (omega=180) = [protein]-peptidylproline (omega=0). Inhibited by both FK506 and rapamycin. In terms of biological role, PPIases accelerate the folding of proteins. It catalyzes the cis-trans isomerization of proline imidic peptide bonds in oligopeptides. This chain is Peptidyl-prolyl cis-trans isomerase FKBP2 (FKBP2), found in Bos taurus (Bovine).